The primary structure comprises 41 residues: Pi-stichotoxin-Hcr5a (41 aa).

3 disulfides stabilise this stretch: Cys4–Cys37, Cys6–Cys30, and Cys20–Cys38.

It belongs to the sea anemone type 3 (BDS) potassium channel toxin family.

It is found in the secreted. The protein resides in the nematocyst. In terms of biological role, weakly inhibits human homomeric ASIC3 (IC(50)=5.5 uM). This Radianthus crispa (Leathery sea anemone) protein is Pi-stichotoxin-Hcr5a.